The sequence spans 103 residues: Preprofallaxidin-6 (103 aa).

The N-terminal stretch at 1-22 (MASLKKSLFLVLFLGFVSLSIC) is a signal peptide. Positions 23–49 (EEEKRENEGNENEEEDENHEEGSEEKR) are excised as a propeptide. A disordered region spans residues 24-50 (EEKRENEGNENEEEDENHEEGSEEKRG). Positions 31-41 (GNENEEEDENH) are enriched in acidic residues. L65 is subject to Leucine amide. The interval 67–103 (KRSEEKRYHPFGKRSEEKRYHPFGKRSEEKRYPPIGK) is disordered. A propeptide spanning residues 69–73 (SEEKR) is cleaved from the precursor. Position 77 is a phenylalanine amide (F77). A propeptide spanning residues 81 to 85 (SEEKR) is cleaved from the precursor. The residue at position 89 (F89) is a Phenylalanine amide. Residues 93 to 97 (SEEKR) constitute a propeptide that is removed on maturation. At I101 the chain carries Isoleucine amide.

It belongs to the frog skin active peptide (FSAP) family. Brevinin subfamily. Expressed by the skin glands.

It localises to the secreted. Fallaxidin-1.3 shows no antibacterial activity against Gram-positive or Gram-negative bacteria. Does not inhibit the formation of NO by neuronal nitric oxide synthase. Has no effect on splenocyte proliferation or smooth muscle contraction. Functionally, fallaxidin-1.4 shows no antibacterial activity against Gram-positive or Gram-negative bacteria. Does not inhibit the formation of NO by neuronal nitric oxide synthase. Has no effect on splenocyte proliferation or smooth muscle contraction. In terms of biological role, fallaxidin-3.1 shows antibacterial activity against the Gram-positive bacteria E.faecalis (MIC=100 uM) and L.lactis (MIC=100 uM). No antibacterial activity against the Gram-positive bacteria B.cereus, L.innocua, M.luteus, S.epidermidis, S.uberis and S.aureus, or the Gram-negative bacteria E.cloacae and E.coli. The polypeptide is Preprofallaxidin-6 (Litoria fallax (Eastern dwarf tree frog)).